A 604-amino-acid chain; its full sequence is Putative JmjC domain-containing protein L887 (604 aa).

The JmjC domain maps to 1-127; sequence MNNMKKIIII…PNNKLNLIQP (127 aa). The helical transmembrane segment at 4-24 threads the bilayer; that stretch reads MKKIIIISIIIIIIIVLLFYI.

The protein localises to the membrane. The sequence is that of Putative JmjC domain-containing protein L887 from Acanthamoeba polyphaga (Amoeba).